Consider the following 174-residue polypeptide: Ribosome maturation factor RimM (174 aa).

The 75-residue stretch at 97 to 171 (EGYYYDFDII…RMVIDPIPGL (75 aa)) folds into the PRC barrel domain.

This sequence belongs to the RimM family. Binds ribosomal protein uS19.

The protein localises to the cytoplasm. Its function is as follows. An accessory protein needed during the final step in the assembly of 30S ribosomal subunit, possibly for assembly of the head region. Essential for efficient processing of 16S rRNA. May be needed both before and after RbfA during the maturation of 16S rRNA. It has affinity for free ribosomal 30S subunits but not for 70S ribosomes. The chain is Ribosome maturation factor RimM from Symbiobacterium thermophilum (strain DSM 24528 / JCM 14929 / IAM 14863 / T).